Consider the following 578-residue polypeptide: L-2,3-diaminopropanoate--citrate ligase (578 aa).

Belongs to the IucA/IucC family. As to quaternary structure, forms a mixture of monomer and dimer in solution.

It carries out the reaction (S)-2,3-diaminopropanoate + citrate + ATP = 2-[(L-alanin-3-ylcarbamoyl)methyl]-2-hydroxybutanedioate + AMP + diphosphate. The protein operates within siderophore biosynthesis. Functionally, catalyzes the synthesis of citryl-L-2,3-diaminopropionic acid from L-2,3-diaminopropionic acid (L-Dap) and citrate, the first step in staphyloferrin B biosynthesis. This chain is L-2,3-diaminopropanoate--citrate ligase, found in Staphylococcus aureus (strain NCTC 8325 / PS 47).